The chain runs to 335 residues: Transmembrane protein 120B-B (335 aa).

The stretch at 1–39 forms a coiled coil; the sequence is MSLQKCQEEWGELEKEFQQLQETHKVYKQKLEELSSLQN. A run of 6 helical transmembrane segments spans residues 100–116, 130–150, 157–177, 193–213, 268–288, and 300–320; these read SLYL…TLLS, FKLY…FVLH, VFNF…SILI, VSTF…YQMF, FLLP…MTLF, and QVFV…LTTL.

Belongs to the TMEM120 family.

It localises to the nucleus inner membrane. In terms of biological role, necessary for efficient adipogenesis. Does not show ion channel activity. The sequence is that of Transmembrane protein 120B-B (tmem120b-b) from Xenopus laevis (African clawed frog).